The sequence spans 155 residues: 2-C-methyl-D-erythritol 2,4-cyclodiphosphate synthase (155 aa).

2 residues coordinate a divalent metal cation: Asp-8 and His-10. 4-CDP-2-C-methyl-D-erythritol 2-phosphate is bound by residues Asp-8–His-10 and His-34–Ser-35. His-42 contributes to the a divalent metal cation binding site. 4-CDP-2-C-methyl-D-erythritol 2-phosphate contacts are provided by residues Asp-56–Gly-58, Phe-61–Asp-65, Ala-100–Ala-106, Thr-132–Glu-135, Phe-139, and Arg-142.

This sequence belongs to the IspF family. As to quaternary structure, homotrimer. A divalent metal cation is required as a cofactor.

The enzyme catalyses 4-CDP-2-C-methyl-D-erythritol 2-phosphate = 2-C-methyl-D-erythritol 2,4-cyclic diphosphate + CMP. Its pathway is isoprenoid biosynthesis; isopentenyl diphosphate biosynthesis via DXP pathway; isopentenyl diphosphate from 1-deoxy-D-xylulose 5-phosphate: step 4/6. Its function is as follows. Involved in the biosynthesis of isopentenyl diphosphate (IPP) and dimethylallyl diphosphate (DMAPP), two major building blocks of isoprenoid compounds. Catalyzes the conversion of 4-diphosphocytidyl-2-C-methyl-D-erythritol 2-phosphate (CDP-ME2P) to 2-C-methyl-D-erythritol 2,4-cyclodiphosphate (ME-CPP) with a corresponding release of cytidine 5-monophosphate (CMP). The sequence is that of 2-C-methyl-D-erythritol 2,4-cyclodiphosphate synthase from Saccharophagus degradans (strain 2-40 / ATCC 43961 / DSM 17024).